Here is a 135-residue protein sequence, read N- to C-terminus: Large ribosomal subunit protein uL16m (135 aa).

This sequence belongs to the universal ribosomal protein uL16 family.

The protein resides in the mitochondrion. The sequence is that of Large ribosomal subunit protein uL16m (RPL16) from Marchantia polymorpha (Common liverwort).